The sequence spans 185 residues: Peptidyl-tRNA hydrolase (185 aa).

Residue Y14 participates in tRNA binding. H19 (proton acceptor) is an active-site residue. 3 residues coordinate tRNA: Y64, N66, and N112.

It belongs to the PTH family. Monomer.

The protein resides in the cytoplasm. It carries out the reaction an N-acyl-L-alpha-aminoacyl-tRNA + H2O = an N-acyl-L-amino acid + a tRNA + H(+). Hydrolyzes ribosome-free peptidyl-tRNAs (with 1 or more amino acids incorporated), which drop off the ribosome during protein synthesis, or as a result of ribosome stalling. Functionally, catalyzes the release of premature peptidyl moieties from peptidyl-tRNA molecules trapped in stalled 50S ribosomal subunits, and thus maintains levels of free tRNAs and 50S ribosomes. This is Peptidyl-tRNA hydrolase from Lactobacillus helveticus (strain DPC 4571).